Reading from the N-terminus, the 673-residue chain is UvrABC system protein B (673 aa).

One can recognise a Helicase ATP-binding domain in the interval 26–414 (EGLEDGLAHQ…GGDVVDQVVR (389 aa)). 39–46 (GVTGSGKT) provides a ligand contact to ATP. Residues 92-115 (YYDYYQPEAYVPSSDTFIEKDASV) carry the Beta-hairpin motif. In terms of domain architecture, Helicase C-terminal spans 431-597 (QVDDLLSEIR…GLNKKVVDIL (167 aa)). A UVR domain is found at 633 to 668 (LQKIHELEGLMMQHAQNLEFEEAAQIRDQLHQLREL).

Belongs to the UvrB family. As to quaternary structure, forms a heterotetramer with UvrA during the search for lesions. Interacts with UvrC in an incision complex.

It localises to the cytoplasm. Its function is as follows. The UvrABC repair system catalyzes the recognition and processing of DNA lesions. A damage recognition complex composed of 2 UvrA and 2 UvrB subunits scans DNA for abnormalities. Upon binding of the UvrA(2)B(2) complex to a putative damaged site, the DNA wraps around one UvrB monomer. DNA wrap is dependent on ATP binding by UvrB and probably causes local melting of the DNA helix, facilitating insertion of UvrB beta-hairpin between the DNA strands. Then UvrB probes one DNA strand for the presence of a lesion. If a lesion is found the UvrA subunits dissociate and the UvrB-DNA preincision complex is formed. This complex is subsequently bound by UvrC and the second UvrB is released. If no lesion is found, the DNA wraps around the other UvrB subunit that will check the other stand for damage. This is UvrABC system protein B from Shigella dysenteriae serotype 1 (strain Sd197).